A 1178-amino-acid polypeptide reads, in one-letter code: Niemann-Pick type C1-related protein (1178 aa).

The N-linked (GlcNAc...) asparagine glycan is linked to N41. 2 helical membrane-spanning segments follow: residues 157–177 (PWLF…GIFL) and 412–432 (VVEW…TSVV). Positions 414-570 (EWLRLCAAVL…LTFFLAGLSL (157 aa)) constitute an SSD domain. The N-linked (GlcNAc...) asparagine glycan is linked to N433. 4 consecutive transmembrane segments (helical) span residues 448–468 (GALA…LCGV), 478–498 (PFLA…AYSL), 516–536 (AGLS…IGAL), and 545–565 (FCII…TFFL). Residue N621 is glycosylated (N-linked (GlcNAc...) asparagine). Residues 789–809 (ATVLVIFAAVTALAIYGATTL) traverse the membrane as a helical segment. N-linked (GlcNAc...) asparagine glycosylation is found at N917 and N943. Helical transmembrane passes span 986–1006 (FTLT…LLLI), 1013–1033 (IIVV…MALI), 1037–1057 (LSMI…DFTI), 1080–1100 (IVMG…ILAL), and 1114–1134 (MMFM…PVVL).

It belongs to the patched family.

It localises to the inner membrane complex. The catalysed reaction is cholesterol(in) = cholesterol(out). In terms of biological role, likely facilitates the efflux of cholesterol and gangliosides from membranes. Plays a role in the regulation of lipid homeostasis. The sequence is that of Niemann-Pick type C1-related protein from Toxoplasma gondii (strain ATCC 50611 / Me49).